The chain runs to 203 residues: Holliday junction branch migration complex subunit RuvA (203 aa).

A domain I region spans residues 1-64 (MIGRLRGIIL…EDAQLLYGFN (64 aa)). The interval 65 to 142 (NKQERTLFKE…KGLHGDLFTP (78 aa)) is domain II. Residues 143-154 (AADLVLTSPAGP) are flexible linker. The interval 155–203 (TADDAEQEAVAALVALGYKPQEASRMVSKIARPDANSETLIREALRAAL) is domain III.

This sequence belongs to the RuvA family. As to quaternary structure, homotetramer. Forms an RuvA(8)-RuvB(12)-Holliday junction (HJ) complex. HJ DNA is sandwiched between 2 RuvA tetramers; dsDNA enters through RuvA and exits via RuvB. An RuvB hexamer assembles on each DNA strand where it exits the tetramer. Each RuvB hexamer is contacted by two RuvA subunits (via domain III) on 2 adjacent RuvB subunits; this complex drives branch migration. In the full resolvosome a probable DNA-RuvA(4)-RuvB(12)-RuvC(2) complex forms which resolves the HJ.

Its subcellular location is the cytoplasm. Functionally, the RuvA-RuvB-RuvC complex processes Holliday junction (HJ) DNA during genetic recombination and DNA repair, while the RuvA-RuvB complex plays an important role in the rescue of blocked DNA replication forks via replication fork reversal (RFR). RuvA specifically binds to HJ cruciform DNA, conferring on it an open structure. The RuvB hexamer acts as an ATP-dependent pump, pulling dsDNA into and through the RuvAB complex. HJ branch migration allows RuvC to scan DNA until it finds its consensus sequence, where it cleaves and resolves the cruciform DNA. This is Holliday junction branch migration complex subunit RuvA from Klebsiella pneumoniae (strain 342).